The primary structure comprises 187 residues: Protein GrpE (187 aa).

Residues 1–23 (MADEQNLDAQAQDQAAEAGAGEE) form a disordered region. Over residues 7 to 23 (LDAQAQDQAAEAGAGEE) the composition is skewed to low complexity.

The protein belongs to the GrpE family. In terms of assembly, homodimer.

The protein resides in the cytoplasm. Its function is as follows. Participates actively in the response to hyperosmotic and heat shock by preventing the aggregation of stress-denatured proteins, in association with DnaK and GrpE. It is the nucleotide exchange factor for DnaK and may function as a thermosensor. Unfolded proteins bind initially to DnaJ; upon interaction with the DnaJ-bound protein, DnaK hydrolyzes its bound ATP, resulting in the formation of a stable complex. GrpE releases ADP from DnaK; ATP binding to DnaK triggers the release of the substrate protein, thus completing the reaction cycle. Several rounds of ATP-dependent interactions between DnaJ, DnaK and GrpE are required for fully efficient folding. The protein is Protein GrpE of Pseudomonas savastanoi pv. phaseolicola (strain 1448A / Race 6) (Pseudomonas syringae pv. phaseolicola (strain 1448A / Race 6)).